The primary structure comprises 675 residues: Protein distal antenna (675 aa).

Residues 5–56 (TKGKRPLRHLTATDKIDAIQRIHDGESKASVARDIGVPESTLRGWCKNEEKL) form the HTH psq-type domain. The segment at residues 32 to 52 (KASVARDIGVPESTLRGWCKN) is a DNA-binding region (H-T-H motif). 5 disordered regions span residues 239–269 (QSLRNARPKANTSQSPRTSNLSDVNGDKNPS), 337–393 (LYSS…PEDT), 458–534 (LNII…SKCN), 546–596 (FQNP…AHKS), and 655–675 (ERQQQNAVSSGEERTRVRRRK). The segment covering 339–368 (SSMPRPSSPQQSSSPPQQHQQVQHHPSTQT) has biased composition (low complexity). Over residues 369–384 (PTPPIVSTPQPTPPSS) the composition is skewed to pro residues. A compositionally biased stretch (basic and acidic residues) spans 469 to 478 (VKSEPEDLSN). Low complexity predominate over residues 479–493 (HNHSSSNAAAVAAPA). Positions 499 to 508 (FNPSPSTSAK) are enriched in polar residues. Over residues 513–528 (QEDDEEQAGPADDESP) the composition is skewed to acidic residues. Over residues 559-579 (NLSIRSNNSPRRRSVSPAVSN) the composition is skewed to low complexity.

As to quaternary structure, homomers. Interacts with itself, danr, ey and dac to form a complex (or complexes) containing the RD factors.

Its subcellular location is the nucleus. In terms of biological role, probable transcription factor with a role in the retinal determination (RD) network. Contributes to differentiation of antenna-specific characteristics. The protein is Protein distal antenna of Aedes aegypti (Yellowfever mosquito).